We begin with the raw amino-acid sequence, 946 residues long: Protocadherin alpha-10 (946 aa).

Positions 1–30 are cleaved as a signal peptide; that stretch reads MSCVAMKYCHESWCLLLSLLLFAIWEPGSG. 6 Cadherin domains span residues 31 to 134, 135 to 243, 244 to 351, 352 to 456, 457 to 566, and 582 to 679; these read QLRY…PPVF, PTTE…APAF, DRAI…APKI, IVTS…APAF, AQSE…APTL, and VPRS…APKA. The Extracellular portion of the chain corresponds to 31–697; the sequence is QLRYSVPEEA…ASESSVVDVN (667 aa). An N-linked (GlcNAc...) asparagine glycan is attached at N258. A glycan (N-linked (GlcNAc...) asparagine) is linked at N549. A helical membrane pass occupies residues 698-718; the sequence is VYLIIAICAVSSLLVLTLVLY. Topologically, residues 719-946 are cytoplasmic; it reads TALRCSALPT…GNSTTDNSDQ (228 aa). PXXP repeat units lie at residues 734-737, 774-777, 795-798, 828-831, 869-872, and 887-890; these read PGKP, PSVP, PRQP, PGGP, PGNP, and PGSP. Positions 734-890 are 6 X 4 AA repeats of P-X-X-P; it reads PGKPMLVCSS…PDKFIIPGSP (157 aa). Disordered regions lie at residues 826-852 and 865-946; these read AGPGGPDQQWPTVSSATPEPEAGEVSP and FKYG…NSDQ. Positions 905–919 are enriched in basic and acidic residues; it reads DKSDFITFGKKEETK.

It is found in the cell membrane. Potential calcium-dependent cell-adhesion protein. May be involved in the establishment and maintenance of specific neuronal connections in the brain. The sequence is that of Protocadherin alpha-10 from Mus musculus (Mouse).